We begin with the raw amino-acid sequence, 154 residues long: Snaclec EMS16 subunit beta (154 aa).

The first 26 residues, 1 to 26, serve as a signal peptide directing secretion; the sequence is MGRLISVRFSLLVVFLSLSGIGAGLC. The cysteines at positions 27 and 38 are disulfide-linked. Residues 34 to 147 enclose the C-type lectin domain; it reads FDQHCYKVFE…CEKSVSFVCK (114 aa). Residue asparagine 47 is glycosylated (N-linked (GlcNAc...) asparagine). Intrachain disulfides connect cysteine 55/cysteine 146 and cysteine 121/cysteine 138.

This sequence belongs to the snaclec family. Heterodimer of subunits A and B; disulfide-linked. Expressed by the venom gland.

The protein resides in the secreted. In terms of biological role, EMS16 is a potent and selective inhibitor of alpha-2/beta-1 (ITGA2/ITGB1) integrin and acts as a potent antagonist of platelet aggregation and cell migration. Binds specifically to the I domain of the alpha-2 subunit, in a metal ion-independent fashion. The chain is Snaclec EMS16 subunit beta from Echis multisquamatus (Central Asian sand viper).